The chain runs to 357 residues: MKMTFRWYGENDPVKLEYIRQIPGIYGIVSAIYDVPVGEVWPVERLQALRARVEGVGLRFEVVESVPVHEDIKLGKPARERLIDNFCQNIRNCAAAGVKVICYNFMPVFDWTRTEMARELPDGSLTLAFDAAAVAEIDPEQGISLPGWDSSYRPEQLRAVLDEYKNVSEEALWEHLEHFLRRIIPVAEEVGVRMAMHPDDPPRPIFGLPRIVKNRDDLMRLVKTVDSPANGITLCSGSLGADLCNNIVSLVREFGGMGRIPFGHLRNVAVQEDGTFFESAHLSCEGSLDMAAIVKAYHDVGFDGYVRPDHGRMIWGETGKPGYGLYDRALGLVYLNGLWEATCKLSPGPAAKVPAPG.

It belongs to the mannonate dehydratase family. Requires Fe(2+) as cofactor. The cofactor is Mn(2+).

The enzyme catalyses D-mannonate = 2-dehydro-3-deoxy-D-gluconate + H2O. Its pathway is carbohydrate metabolism; pentose and glucuronate interconversion. Its function is as follows. Catalyzes the dehydration of D-mannonate. The protein is Mannonate dehydratase of Sorangium cellulosum (strain So ce56) (Polyangium cellulosum (strain So ce56)).